Here is a 427-residue protein sequence, read N- to C-terminus: Adenylosuccinate synthetase (427 aa).

GTP contacts are provided by residues 12–18 (GDEGKGK) and 40–42 (GHT). The active-site Proton acceptor is the Asp13. Residues Asp13 and Gly40 each contribute to the Mg(2+) site. Residues 13 to 16 (DEGK), 38 to 41 (NAGH), Thr128, Arg142, Gln223, Thr238, and Arg302 each bind IMP. His41 functions as the Proton donor in the catalytic mechanism. 298-304 (VTTGRDR) serves as a coordination point for substrate. Residues Arg304, 330–332 (KLD), and 412–414 (GVG) contribute to the GTP site.

The protein belongs to the adenylosuccinate synthetase family. As to quaternary structure, homodimer. Requires Mg(2+) as cofactor.

The protein resides in the cytoplasm. The enzyme catalyses IMP + L-aspartate + GTP = N(6)-(1,2-dicarboxyethyl)-AMP + GDP + phosphate + 2 H(+). The protein operates within purine metabolism; AMP biosynthesis via de novo pathway; AMP from IMP: step 1/2. Plays an important role in the de novo pathway of purine nucleotide biosynthesis. Catalyzes the first committed step in the biosynthesis of AMP from IMP. This is Adenylosuccinate synthetase from Streptomyces griseus subsp. griseus (strain JCM 4626 / CBS 651.72 / NBRC 13350 / KCC S-0626 / ISP 5235).